Consider the following 502-residue polypeptide: UPF0371 protein CLL_A2797 (502 aa).

This sequence belongs to the UPF0371 family.

This is UPF0371 protein CLL_A2797 from Clostridium botulinum (strain Eklund 17B / Type B).